Here is a 252-residue protein sequence, read N- to C-terminus: 5'-nucleotidase SurE (252 aa).

4 residues coordinate a divalent metal cation: D8, D9, S40, and N92.

This sequence belongs to the SurE nucleotidase family. Requires a divalent metal cation as cofactor.

It is found in the cytoplasm. The enzyme catalyses a ribonucleoside 5'-phosphate + H2O = a ribonucleoside + phosphate. Its function is as follows. Nucleotidase that shows phosphatase activity on nucleoside 5'-monophosphates. The polypeptide is 5'-nucleotidase SurE (Chelativorans sp. (strain BNC1)).